A 327-amino-acid polypeptide reads, in one-letter code: Phenylalanine--tRNA ligase alpha subunit (327 aa).

Residue Glu-252 participates in Mg(2+) binding.

It belongs to the class-II aminoacyl-tRNA synthetase family. Phe-tRNA synthetase alpha subunit type 1 subfamily. As to quaternary structure, tetramer of two alpha and two beta subunits. Mg(2+) serves as cofactor.

The protein localises to the cytoplasm. It carries out the reaction tRNA(Phe) + L-phenylalanine + ATP = L-phenylalanyl-tRNA(Phe) + AMP + diphosphate + H(+). The sequence is that of Phenylalanine--tRNA ligase alpha subunit from Pectobacterium carotovorum subsp. carotovorum (strain PC1).